Consider the following 187-residue polypeptide: Orotate phosphoribosyltransferase (187 aa).

5-phospho-alpha-D-ribose 1-diphosphate contacts are provided by residues Arg-99, Lys-100, Lys-103, His-105, and 125 to 133; that span reads DDVITTGGS. Residues Thr-129 and Arg-157 each contribute to the orotate site.

The protein belongs to the purine/pyrimidine phosphoribosyltransferase family. PyrE subfamily. Homodimer. Mg(2+) is required as a cofactor.

It carries out the reaction orotidine 5'-phosphate + diphosphate = orotate + 5-phospho-alpha-D-ribose 1-diphosphate. Its pathway is pyrimidine metabolism; UMP biosynthesis via de novo pathway; UMP from orotate: step 1/2. Functionally, catalyzes the transfer of a ribosyl phosphate group from 5-phosphoribose 1-diphosphate to orotate, leading to the formation of orotidine monophosphate (OMP). The sequence is that of Orotate phosphoribosyltransferase from Leptospira borgpetersenii serovar Hardjo-bovis (strain L550).